The following is a 391-amino-acid chain: Phosphopentomutase (391 aa).

Asp-14 is a binding site for Mn(2+). The tract at residues 61–88 is disordered; that stretch reads IQGVPPDPAPTAFHGRMAERSEGKDTTT. The span at 76-87 shows a compositional bias: basic and acidic residues; that stretch reads RMAERSEGKDTT. Positions 286, 291, 327, 328, and 339 each coordinate Mn(2+).

Belongs to the phosphopentomutase family. Mn(2+) serves as cofactor.

Its subcellular location is the cytoplasm. The catalysed reaction is 2-deoxy-alpha-D-ribose 1-phosphate = 2-deoxy-D-ribose 5-phosphate. It carries out the reaction alpha-D-ribose 1-phosphate = D-ribose 5-phosphate. It functions in the pathway carbohydrate degradation; 2-deoxy-D-ribose 1-phosphate degradation; D-glyceraldehyde 3-phosphate and acetaldehyde from 2-deoxy-alpha-D-ribose 1-phosphate: step 1/2. Functionally, isomerase that catalyzes the conversion of deoxy-ribose 1-phosphate (dRib-1-P) and ribose 1-phosphate (Rib-1-P) to deoxy-ribose 5-phosphate (dRib-5-P) and ribose 5-phosphate (Rib-5-P), respectively. The polypeptide is Phosphopentomutase (Anaeromyxobacter dehalogenans (strain 2CP-C)).